Consider the following 790-residue polypeptide: Solute carrier family 26 member 9 (790 aa).

Residues 1–70 (MNQPRPRYVV…WLPKYKIKDY (70 aa)) lie on the Cytoplasmic side of the membrane. Residues 71–96 (IIPDLLGGLSGGCIQVPQGMAFALLA) traverse the membrane as a helical segment. Over 97–100 (NLPA) the chain is Extracellular. A helical transmembrane segment spans residues 101-109 (VNGLYSSFF). Residues 110-129 (PLLTYFFLGGIHQMVPGTFA) are Cytoplasmic-facing. The chain crosses the membrane as a helical span at residues 130-142 (VISILVGNICLQL). Residues 143–162 (APESKFQIFNNVTNETYVDT) are Extracellular-facing. A helical membrane pass occupies residues 163–191 (AAMEAERLHVSATLACLTAVIQMALGFMQ). Topologically, residues 192-201 (FGFVAIYLSE) are cytoplasmic. Residues 202-224 (SFIRGFMTAAGLQILISVLKYIF) traverse the membrane as a helical segment. Residues 225-237 (GLTIPSYTGPGSI) lie on the Extracellular side of the membrane. Residues 238-246 (VFTFIDICK) constitute an intramembrane region (helical). The Extracellular segment spans residues 247–254 (NLPHTNIA). The helical transmembrane segment at 255 to 275 (SLIFALVSGVFLVLVKELNAR) threads the bilayer. The Cytoplasmic portion of the chain corresponds to 276 to 286 (YMHKIHFPIPT). Residues 287–299 (EMIVVVVATAISG) traverse the membrane as a helical segment. At 300–334 (SCKMPKKYHMQIVGEIRQGFPTPVAPMVSQWKGMV) the chain is on the extracellular side. The helical transmembrane segment at 335–358 (GTAFSLAIVGYVINLAMGRTLASK) threads the bilayer. Residues 359 to 365 (HGYDVDS) are Cytoplasmic-facing. A helical transmembrane segment spans residues 366 to 379 (NQEMIALGCSNFFG). The Extracellular segment spans residues 380–390 (SFFKIHVICCA). The chain crosses the membrane as a helical span at residues 391-400 (LSVTLAVDGA). Residues 401 to 405 (GGKSQ) lie on the Cytoplasmic side of the membrane. Residues 406–419 (VASLCVSLVVMITM) form a helical membrane-spanning segment. Residues 420 to 431 (LVLGSYLYPLPK) are Extracellular-facing. The chain crosses the membrane as a helical span at residues 432–457 (AVLGALIAVNLKNSLKQLTDPYYLWR). At 458–461 (KSKL) the chain is on the cytoplasmic side. A helical transmembrane segment spans residues 462–476 (DCCVWVVSFLSSFFL). The Extracellular portion of the chain corresponds to 477–479 (SLP). The chain crosses the membrane as a helical span at residues 480 to 498 (YGVAVGVAFSILVVIFQTQ). The Cytoplasmic segment spans residues 499 to 790 (FRNGSTLAQV…MFHTETLTAL (292 aa)). The STAS domain occupies 519 to 737 (TYNRAQEIAG…PSIHDAVLFA (219 aa)).

It belongs to the SLC26A/SulP transporter (TC 2.A.53) family. Homodimer. In terms of tissue distribution, expressed in stomach and trachea. Abundantly expressed in the apical domain of the surface epithelial cells and the deep cells in the gastric gland. Also expressed in heart, brain, lung and liver.

It is found in the cell membrane. The protein resides in the endomembrane system. It catalyses the reaction chloride(in) = chloride(out). The catalysed reaction is hydrogencarbonate(in) + chloride(out) = hydrogencarbonate(out) + chloride(in). Inhibited by ammonium and thiosulfate. Ion transporter that can act both as an ion channel and anion exchanger. Mainly acts as a chloride channel, which mediate uncoupled chloride anion transport in an alternate-access mechanism where a saturable binding site is alternately exposed to either one or the other side of the membrane. Also acts as a DIDS- and thiosulfate- sensitive anion exchanger the exchange of chloride for bicarbonate ions across the cell membrane. The sequence is that of Solute carrier family 26 member 9 from Mus musculus (Mouse).